We begin with the raw amino-acid sequence, 438 residues long: uncharacterized protein (438 aa).

An N-terminal signal peptide occupies residues 1-20 (MNTRLALVLCAVGSGVLSFS). The N-palmitoyl cysteine moiety is linked to residue cysteine 21. Cysteine 21 is lipidated: S-diacylglycerol cysteine.

It is found in the cell membrane. This is an uncharacterized protein from Treponema pallidum (strain Nichols).